A 200-amino-acid chain; its full sequence is General odorant-binding protein 70 (200 aa).

The signal sequence occupies residues 1 to 29 (MRRQYSMWASTVAVIACGSALMLLHPVGA). 2 cysteine pairs are disulfide-bonded: Cys-105–Cys-174 and Cys-152–Cys-183.

Belongs to the PBP/GOBP family.

The protein localises to the secreted. In terms of biological role, present in the aqueous fluid surrounding olfactory sensory dendrites and are thought to aid in the capture and transport of hydrophobic odorants into and through this fluid. This chain is General odorant-binding protein 70 (Obp70), found in Anopheles gambiae (African malaria mosquito).